We begin with the raw amino-acid sequence, 77 residues long: MSDCHPVLLPEGPFSREQAVAVTTAYRNVLIEDDQGTHFRLVIRNAGGQLRWRCWNFEPDAGKQLNSYLASEGILRQ.

This sequence belongs to the UPF0401 family.

In Escherichia coli (strain UTI89 / UPEC), this protein is UPF0401 protein UTI89_C4989.